Reading from the N-terminus, the 560-residue chain is DNA ligase B (560 aa).

K124 functions as the N6-AMP-lysine intermediate in the catalytic mechanism.

The protein belongs to the NAD-dependent DNA ligase family. LigB subfamily.

The enzyme catalyses NAD(+) + (deoxyribonucleotide)n-3'-hydroxyl + 5'-phospho-(deoxyribonucleotide)m = (deoxyribonucleotide)n+m + AMP + beta-nicotinamide D-nucleotide.. Catalyzes the formation of phosphodiester linkages between 5'-phosphoryl and 3'-hydroxyl groups in double-stranded DNA using NAD as a coenzyme and as the energy source for the reaction. The protein is DNA ligase B of Escherichia coli O17:K52:H18 (strain UMN026 / ExPEC).